Here is a 219-residue protein sequence, read N- to C-terminus: Ribosomal RNA small subunit methyltransferase G (219 aa).

3 residues coordinate S-adenosyl-L-methionine: G81, L86, and R150.

It belongs to the methyltransferase superfamily. RNA methyltransferase RsmG family.

Its subcellular location is the cytoplasm. It catalyses the reaction guanosine(527) in 16S rRNA + S-adenosyl-L-methionine = N(7)-methylguanosine(527) in 16S rRNA + S-adenosyl-L-homocysteine. Specifically methylates the N7 position of guanine in position 527 of 16S rRNA. The sequence is that of Ribosomal RNA small subunit methyltransferase G from Magnetococcus marinus (strain ATCC BAA-1437 / JCM 17883 / MC-1).